The following is a 303-amino-acid chain: Elongation factor Ts (303 aa).

The tract at residues 80-83 (TDFV) is involved in Mg(2+) ion dislocation from EF-Tu.

It belongs to the EF-Ts family.

The protein resides in the cytoplasm. In terms of biological role, associates with the EF-Tu.GDP complex and induces the exchange of GDP to GTP. It remains bound to the aminoacyl-tRNA.EF-Tu.GTP complex up to the GTP hydrolysis stage on the ribosome. The chain is Elongation factor Ts from Clostridium botulinum (strain Alaska E43 / Type E3).